We begin with the raw amino-acid sequence, 743 residues long: NAD(P)H-quinone oxidoreductase subunit 5, chloroplastic (743 aa).

The next 16 helical transmembrane spans lie at 9 to 29 (WIIPFLPLPVPMLIGLGLLLF), 40 to 60 (WAFQSVLLLSIVMIFSMNLSI), 89 to 109 (IDPLTSIMSILITTVGIMVLI), 125 to 145 (FAYMSFFSTSMLGLVTSSNLI), 147 to 167 (IYIFWELVGMCSYLLIGFWFT), 185 to 205 (GDFGLLLGILGFYWITGSFEF), 219 to 239 (NEVNFLFVTLCAVLLFAGAIA), 258 to 278 (TPISALIHAATMVAAGIFLVA), 284 to 304 (FIVIPHIMNLISLIGIITVFF), 327 to 347 (LGYMMLALGMGSYRSALFHLI), 354 to 374 (ALLFLGSGSVIHSMETLVGYC), 396 to 416 (NSFLLGTLSLCGIPPLACFWS), 425 to 445 (WLYSPIFAIIAWSTAGLTAFY), 551 to 571 (LFPILILILFTLFVGFLGIPF), 607 to 627 (VFSVSIASFGIYIAFFLYKPV), and 723 to 743 (YLFFYFSYVSIFLFIYYFLNL).

It belongs to the complex I subunit 5 family. As to quaternary structure, NDH is composed of at least 16 different subunits, 5 of which are encoded in the nucleus.

The protein resides in the plastid. It localises to the chloroplast thylakoid membrane. The enzyme catalyses a plastoquinone + NADH + (n+1) H(+)(in) = a plastoquinol + NAD(+) + n H(+)(out). It carries out the reaction a plastoquinone + NADPH + (n+1) H(+)(in) = a plastoquinol + NADP(+) + n H(+)(out). Functionally, NDH shuttles electrons from NAD(P)H:plastoquinone, via FMN and iron-sulfur (Fe-S) centers, to quinones in the photosynthetic chain and possibly in a chloroplast respiratory chain. The immediate electron acceptor for the enzyme in this species is believed to be plastoquinone. Couples the redox reaction to proton translocation, and thus conserves the redox energy in a proton gradient. This chain is NAD(P)H-quinone oxidoreductase subunit 5, chloroplastic (ndhF), found in Ambrosia trifida (Giant ragweed).